A 772-amino-acid polypeptide reads, in one-letter code: TSA1-like protein (772 aa).

Residues 1–24 (MGTKFLALGLSLCLVLSSFYQVSC) form the signal peptide. The tract at residues 49–72 (LQGNEAVDQTETSGQKNSTVSDNN) is disordered. EFE repeat repeat units follow at residues 98–138 (GAVT…KVEE), 139–176 (SKDD…DSAQ), 177–213 (GLDD…DDLT), 214–251 (GIND…STSS), 252–292 (TDDE…VKDD), 293–330 (VDDK…ADNK), 331–368 (AEGD…DFSE), 369–407 (GDDS…STGD), 408–439 (KDDD…EELK), and 440–472 (NESE…NGEN). Positions 98–472 (GAVTDEVDKP…ATNAKANGEN (375 aa)) are 10 X approximate EFE repeat. The stretch at 187-476 (QSMLDEIERD…KANGENSAKN (290 aa)) forms a coiled coil. Disordered regions lie at residues 465-487 (NAKA…VQKS) and 555-585 (HRKE…ATSE). The segment covering 466 to 487 (AKANGENSAKNPSTISTTVQKS) has biased composition (polar residues). Over residues 561 to 585 (SKVGSVLGSSSSVTSTTSESAATSE) the composition is skewed to low complexity. A coiled-coil region spans residues 688 to 748 (DALHIRIVAI…AVHKAKDEQA (61 aa)).

Has no interaction with PYK10 and is not part of the PYK10 complex. Interacts directly or indirectly with MEB1 and MEB2. In terms of tissue distribution, expressed in roots. Detected in shoot apex.

It is found in the endoplasmic reticulum lumen. Responsible for the ER body formation. Regulates the number and shape of the ER bodies and the accumulation of PYK10 in ER bodies, but is not involved in the expression of PYK10. This is TSA1-like protein (NAI2) from Arabidopsis thaliana (Mouse-ear cress).